We begin with the raw amino-acid sequence, 3086 residues long: Genome polyprotein (3086 aa).

The Peptidase S30 domain occupies 122 to 256 (RRSKILACDL…RAGIHTIKHY (135 aa)). Catalysis depends on for P1 proteinase activity residues histidine 173, aspartate 182, and serine 215. The 122-residue stretch at 590 to 711 (YYVAPEGYCY…TGEMLDYNVG (122 aa)) folds into the Peptidase C6 domain. Residues cysteine 598 and histidine 670 each act as for helper component proteinase activity in the active site. A Helicase ATP-binding domain is found at 1189–1341 (ISSDTANAEF…PMFPVRVSEA (153 aa)). 1202 to 1209 (GGVGTGKS) provides a ligand contact to ATP. The short motif at 1291-1294 (DECH) is the DEAH box element. The residue at position 1870 (tyrosine 1870) is an O-(5'-phospho-RNA)-tyrosine. The disordered stretch occupies residues 1970–1990 (HDGELRQSRPSRPIQKDQVPA). In terms of domain architecture, Peptidase C4 spans 2000-2217 (SKSIAKGLRD…VNYGTMDLTS (218 aa)). Active-site for nuclear inclusion protein A activity residues include histidine 2045, aspartate 2080, and cysteine 2149. The 125-residue stretch at 2482-2606 (WDYFDADGSR…AVEPSLSDKI (125 aa)) folds into the RdRp catalytic domain. The span at 2762–2821 (TAASSAATQTSTTSPTVTSTSGASTSTSSGTTSAPLASTTPPVSATTTPSTGTTAPTTPT) shows a compositional bias: low complexity. The tract at residues 2762-2822 (TAASSAATQT…GTTAPTTPTV (61 aa)) is disordered. Threonine 3069 carries the post-translational modification Phosphothreonine.

Belongs to the potyviridae genome polyprotein family. Post-translationally, VPg is uridylylated by the polymerase and is covalently attached to the 5'-end of the genomic RNA. This uridylylated form acts as a nucleotide-peptide primer for the polymerase. In terms of processing, genome polyprotein of potyviruses undergoes post-translational proteolytic processing by the main proteinase NIa-pro resulting in the production of at least ten individual proteins. The P1 proteinase and the HC-pro cleave only their respective C-termini autocatalytically. 6K1 is essential for proper proteolytic separation of P3 from CI.

The protein localises to the host cytoplasmic vesicle membrane. The protein resides in the host cytoplasmic vesicle. It is found in the virion. It carries out the reaction RNA(n) + a ribonucleoside 5'-triphosphate = RNA(n+1) + diphosphate. The enzyme catalyses Hydrolyzes glutaminyl bonds, and activity is further restricted by preferences for the amino acids in P6 - P1' that vary with the species of potyvirus, e.g. Glu-Xaa-Xaa-Tyr-Xaa-Gln-|-(Ser or Gly) for the enzyme from tobacco etch virus. The natural substrate is the viral polyprotein, but other proteins and oligopeptides containing the appropriate consensus sequence are also cleaved.. It catalyses the reaction Hydrolyzes a Gly-|-Gly bond at its own C-terminus, commonly in the sequence -Tyr-Xaa-Val-Gly-|-Gly, in the processing of the potyviral polyprotein.. In terms of biological role, required for aphid transmission and also has proteolytic activity. Only cleaves a Gly-Gly dipeptide at its own C-terminus. Interacts with virions and aphid stylets. Acts as a suppressor of RNA-mediated gene silencing, also known as post-transcriptional gene silencing (PTGS), a mechanism of plant viral defense that limits the accumulation of viral RNAs. May have RNA-binding activity. Has helicase activity. It may be involved in replication. Its function is as follows. Indispensable for virus replication. Reduces the abundance of host transcripts related to jasmonic acid biosynthesis therefore altering the host defenses. In order to increase its own stability, decreases host protein degradation pathways. Functionally, indispensable for virus replication. In terms of biological role, mediates the cap-independent, EIF4E-dependent translation of viral genomic RNAs. Binds to the cap-binding site of host EIF4E and thus interferes with the host EIF4E-dependent mRNA export and translation. VPg-RNA directly binds EIF4E and is a template for transcription. Also forms trimeric complexes with EIF4E-EIF4G, which are templates for translation. Has RNA-binding and proteolytic activities. Its function is as follows. An RNA-dependent RNA polymerase that plays an essential role in the virus replication. Functionally, involved in aphid transmission, cell-to-cell and systemis movement, encapsidation of the viral RNA and in the regulation of viral RNA amplification. This Dactylis glomerata (Orchard grass) protein is Genome polyprotein.